A 382-amino-acid chain; its full sequence is MGGFCGADRGGFLALLVWLQLLQPLFSGTYKPREDSGVMHRPQRPRRPRSDPEAPAQQSRLKSLSISHPSGVPVSVDRTEIPGSGSPSGTTTKITLENRRSSLGGPFFTDTCGHRITEVDPGSLSAGRKWPWQVSLQSQNEHVCGGSLISHRWVLTAAHCIYEQEEYMVMLGDDMLHSESESVTLVPVQDIIFPSNFDIQTMRNDIALALLYFPVNYSSLIQPVCLPEEPFRVKNGTVCWVTGWGQQNEIDAGFASILLQEVQQRILLQKHCNTLFQRQLGTSKNLVIKGMICGLQDSGQSLCWGDSGNPLVCESDNTWTQVGIMSWGINCNGVPVLSVYTDIAEYNEWVSYVLSQASRMDPMGVLVLYLSLVFPLALLVAL.

An N-terminal signal peptide occupies residues methionine 1 to serine 27. Residues tyrosine 30–glutamate 97 form a disordered region. Polar residues-rich tracts occupy residues alanine 56–histidine 68 and glycine 85–threonine 95. A Peptidase S1 domain is found at valine 119–serine 355. The cysteines at positions 144 and 160 are disulfide-linked. Active-site charge relay system residues include histidine 159 and aspartate 205. 3 cysteine pairs are disulfide-bonded: cysteine 239–cysteine 313, cysteine 272–cysteine 293, and cysteine 303–cysteine 331. The Charge relay system role is filled by serine 307. A helical membrane pass occupies residues proline 362–leucine 382.

The protein belongs to the peptidase S1 family. Testis-specific. Expressed in germ cells at the stages from late pachytene spermatocytes to spermatids.

It localises to the cell membrane. Functionally, plays a role in spermatogenesis. Involved in germ cell survival during meiosis. Lacks protease activity in vitro. This Mus musculus (Mouse) protein is Serine protease 43.